We begin with the raw amino-acid sequence, 82 residues long: MVTIRLARGGAKKRPFYNIVVADSRNARDGRFIERVGFFNPLARGQEETLRLDLARVEHWVSNGAATTDRVAKLIKDAKAAA.

This sequence belongs to the bacterial ribosomal protein bS16 family.

The protein is Small ribosomal subunit protein bS16 of Shewanella sp. (strain MR-4).